The following is a 954-amino-acid chain: Glycine dehydrogenase (decarboxylating) (954 aa).

Residue Lys-704 is modified to N6-(pyridoxal phosphate)lysine.

This sequence belongs to the GcvP family. In terms of assembly, the glycine cleavage system is composed of four proteins: P, T, L and H. The cofactor is pyridoxal 5'-phosphate.

It carries out the reaction N(6)-[(R)-lipoyl]-L-lysyl-[glycine-cleavage complex H protein] + glycine + H(+) = N(6)-[(R)-S(8)-aminomethyldihydrolipoyl]-L-lysyl-[glycine-cleavage complex H protein] + CO2. Its function is as follows. The glycine cleavage system catalyzes the degradation of glycine. The P protein binds the alpha-amino group of glycine through its pyridoxal phosphate cofactor; CO(2) is released and the remaining methylamine moiety is then transferred to the lipoamide cofactor of the H protein. The sequence is that of Glycine dehydrogenase (decarboxylating) from Vibrio parahaemolyticus serotype O3:K6 (strain RIMD 2210633).